The sequence spans 341 residues: tRNA (cytidine(56)-2'-O)-methyltransferase (341 aa).

S-adenosyl-L-methionine is bound by residues Leu79 and 104-108 (GAEKV). Residues 187–294 (IIRHVETVYK…VAHADNLVSM (108 aa)) enclose the HD domain.

This sequence belongs to the aTrm56 family. As to quaternary structure, homodimer.

Its subcellular location is the cytoplasm. It carries out the reaction cytidine(56) in tRNA + S-adenosyl-L-methionine = 2'-O-methylcytidine(56) in tRNA + S-adenosyl-L-homocysteine + H(+). Specifically catalyzes the AdoMet-dependent 2'-O-ribose methylation of cytidine at position 56 in tRNAs. This Picrophilus torridus (strain ATCC 700027 / DSM 9790 / JCM 10055 / NBRC 100828 / KAW 2/3) protein is tRNA (cytidine(56)-2'-O)-methyltransferase.